The chain runs to 87 residues: Polyketide-8 synthase acyl carrier protein 2 (87 aa).

Residues 8-83 (ALDKEQLREL…GTYELLTSKL (76 aa)) form the Carrier domain. S43 is modified (O-(pantetheine 4'-phosphoryl)serine).

4'-phosphopantetheine is transferred from CoA to a specific serine of the apo-ACP-like protein.

Functionally, acyl carrier protein. This Streptomyces avermitilis (strain ATCC 31267 / DSM 46492 / JCM 5070 / NBRC 14893 / NCIMB 12804 / NRRL 8165 / MA-4680) protein is Polyketide-8 synthase acyl carrier protein 2.